Reading from the N-terminus, the 296-residue chain is GTPase Era (296 aa).

Residues 7–174 form the Era-type G domain; sequence KAGYISIVGR…TEVIRHYLPE (168 aa). Positions 15-22 are G1; that stretch reads GRPNVGKS. Residue 15–22 coordinates GTP; sequence GRPNVGKS. Residues 41-45 form a G2 region; sequence QTTRH. A G3 region spans residues 62-65; it reads DTPG. GTP-binding positions include 62 to 66 and 123 to 126; these read DTPGF and NKID. The tract at residues 123–126 is G4; sequence NKID. Residues 153–155 are G5; sequence VSA. A KH type-2 domain is found at 205–281; the sequence is IGEEVPYSVS…YLEIWVKVKS (77 aa).

This sequence belongs to the TRAFAC class TrmE-Era-EngA-EngB-Septin-like GTPase superfamily. Era GTPase family. In terms of assembly, monomer.

Its subcellular location is the cytoplasm. The protein localises to the cell inner membrane. In terms of biological role, an essential GTPase that binds both GDP and GTP, with rapid nucleotide exchange. Plays a role in 16S rRNA processing and 30S ribosomal subunit biogenesis and possibly also in cell cycle regulation and energy metabolism. The chain is GTPase Era from Nitrosomonas eutropha (strain DSM 101675 / C91 / Nm57).